The chain runs to 1133 residues: Roquin-1 (1133 aa).

Residues cysteine 14, cysteine 17, cysteine 33, histidine 35, cysteine 38, cysteine 50, and aspartate 53 each coordinate Zn(2+). The segment at 14–54 (CPICTQTFDETIRKPISLGCGHTVCKMCLNKLHRKACPFDQ) adopts an RING-type; degenerate zinc-finger fold. The HEPN-N stretch occupies residues 89–173 (GVEDTKHYEE…RTVTELILQH (85 aa)). The ROQ stretch occupies residues 174–326 (QNPQQLSSNL…MQSIIDKLQT (153 aa)). The tract at residues 327–396 (PASFAQSVQE…VVHGLVDYIQ (70 aa)) is HEPN-C. The C3H1-type zinc finger occupies 413-441 (KYKTYMCRDMKQRGGCPRGASCTFAHSQE). Phosphoserine occurs at positions 462, 531, 535, and 863. The interval 505 to 542 (TQLIPRGTDPSYDSSLKPGKIDHLSSSAPGSPPDLLES) is disordered. 3 disordered regions span residues 1000–1019 (NTLAGQSQPPPPPPPKWPGM), 1058–1078 (NTSKQAENGQPEPQNKVPAED), and 1094–1133 (QENISLLSNKTSSLNLSEDPEGGGDNNDSQRSGVTPSSAP). Positions 1007 to 1016 (QPPPPPPPKW) are enriched in pro residues. Positions 1058–1070 (NTSKQAENGQPEP) are enriched in polar residues. Over residues 1096 to 1110 (NISLLSNKTSSLNLS) the composition is skewed to low complexity. Residue serine 1110 is modified to Phosphoserine. The span at 1119–1133 (NNDSQRSGVTPSSAP) shows a compositional bias: polar residues.

As to quaternary structure, able to homodimerize. Interacts with DDX6 and EDC4. Interacts with CCR4-NOT deadenylase complex. Interacts with RC3H1; the interaction is RNA independent. Proteolytically cleaved after Arg-510 and Arg-579 by MALT1 in activated CD4(+) T cells; cleavage at Arg-510 and Arg-579 is critical for promoting RC3H1 degradation in response to T-cell receptor (TCR) stimulation, and hence is necessary for prolonging the stability of a set of mRNAs controlling Th17 cell differentiation. In terms of tissue distribution, widely expressed. Expressed at higher level in cerebellum, spleen, ovary and liver.

It is found in the cytoplasm. The protein resides in the P-body. The protein localises to the cytoplasmic granule. It carries out the reaction S-ubiquitinyl-[E2 ubiquitin-conjugating enzyme]-L-cysteine + [acceptor protein]-L-lysine = [E2 ubiquitin-conjugating enzyme]-L-cysteine + N(6)-ubiquitinyl-[acceptor protein]-L-lysine.. It participates in protein modification; protein ubiquitination. Functionally, post-transcriptional repressor of mRNAs containing a conserved stem loop motif, called constitutive decay element (CDE), which is often located in the 3'-UTR, as in HMGXB3, ICOS, IER3, NFKBID, NFKBIZ, PPP1R10, TNF, TNFRSF4 and in many more mRNAs. Cleaves translationally inactive mRNAs harboring a stem-loop (SL), often located in their 3'-UTRs, during the early phase of inflammation in a helicase UPF1-independent manner. Binds to CDE and promotes mRNA deadenylation and degradation. This process does not involve miRNAs. In follicular helper T (Tfh) cells, represses of ICOS and TNFRSF4 expression, thus preventing spontaneous Tfh cell differentiation, germinal center B-cell differentiation in the absence of immunization and autoimmunity. In resting or LPS-stimulated macrophages, controls inflammation by suppressing TNF expression. Also recognizes CDE in its own mRNA and in that of paralogous RC3H2, possibly leading to feedback loop regulation. Recognizes and binds mRNAs containing a hexaloop stem-loop motif, called alternative decay element (ADE). Together with ZC3H12A, destabilizes TNFRSF4/OX40 mRNA by binding to the conserved stem loop structure in its 3'UTR. Able to interact with double-stranded RNA (dsRNA). miRNA-binding protein that regulates microRNA homeostasis. Enhances DICER-mediated processing of pre-MIR146a but reduces mature MIR146a levels through an increase of 3' end uridylation. Both inhibits ICOS mRNA expression and they may act together to exert the suppression. Acts as a ubiquitin E3 ligase. Pairs with E2 enzymes UBE2A, UBE2B, UBE2D2, UBE2F, UBE2G1, UBE2G2 and UBE2L3 and produces polyubiquitin chains. Shows the strongest activity when paired with UBE2N:UBE2V1 or UBE2N:UBE2V2 E2 complexes and generate both short and long polyubiquitin chains. This Homo sapiens (Human) protein is Roquin-1.